We begin with the raw amino-acid sequence, 215 residues long: Large ribosomal subunit protein uL1 (215 aa).

It belongs to the universal ribosomal protein uL1 family. In terms of assembly, part of the 50S ribosomal subunit.

Binds directly to 23S rRNA. Probably involved in E site tRNA release. Its function is as follows. Protein L1 is also a translational repressor protein, it controls the translation of its operon by binding to its mRNA. This is Large ribosomal subunit protein uL1 from Archaeoglobus fulgidus (strain ATCC 49558 / DSM 4304 / JCM 9628 / NBRC 100126 / VC-16).